The sequence spans 85 residues: Alpha-insect toxin BjaIT (85 aa).

Residues 1–19 form the signal peptide; the sequence is MNYLVVICFALLLMTGVES. One can recognise an LCN-type CS-alpha/beta domain in the interval 21 to 83; it reads RDAYIADNLN…VPIRIPGACR (63 aa). Intrachain disulfides connect Cys-31/Cys-82, Cys-35/Cys-55, Cys-41/Cys-65, and Cys-45/Cys-67. The residue at position 83 (Arg-83) is an Arginine amide.

This sequence belongs to the long (4 C-C) scorpion toxin superfamily. Sodium channel inhibitor family. Alpha subfamily. As to expression, expressed by the venom gland.

It is found in the secreted. In terms of biological role, alpha toxins bind voltage-independently at site-3 of sodium channels (Nav) and inhibit the inactivation of the activated channels, thereby blocking neuronal transmission. This toxin is active against insects (para/tipE). This chain is Alpha-insect toxin BjaIT, found in Hottentotta judaicus (Black scorpion).